The primary structure comprises 95 residues: CRISPR-associated endoribonuclease Cas2 (95 aa).

Position 9 (aspartate 9) interacts with Mg(2+).

The protein belongs to the CRISPR-associated endoribonuclease Cas2 protein family. Homodimer, forms a heterotetramer with a Cas1 homodimer. Mg(2+) serves as cofactor.

CRISPR (clustered regularly interspaced short palindromic repeat), is an adaptive immune system that provides protection against mobile genetic elements (viruses, transposable elements and conjugative plasmids). CRISPR clusters contain sequences complementary to antecedent mobile elements and target invading nucleic acids. CRISPR clusters are transcribed and processed into CRISPR RNA (crRNA). Functions as a ssRNA-specific endoribonuclease. Involved in the integration of spacer DNA into the CRISPR cassette. This Methylorubrum extorquens (strain CM4 / NCIMB 13688) (Methylobacterium extorquens) protein is CRISPR-associated endoribonuclease Cas2.